A 227-amino-acid polypeptide reads, in one-letter code: Probable 2-phosphosulfolactate phosphatase (227 aa).

Belongs to the ComB family. It depends on Mg(2+) as a cofactor.

It catalyses the reaction (2R)-O-phospho-3-sulfolactate + H2O = (2R)-3-sulfolactate + phosphate. In Thermotoga petrophila (strain ATCC BAA-488 / DSM 13995 / JCM 10881 / RKU-1), this protein is Probable 2-phosphosulfolactate phosphatase.